Consider the following 329-residue polypeptide: Mas-related G-protein coupled receptor member X2 (329 aa).

The Extracellular portion of the chain corresponds to 1 to 33; that stretch reads MDPTTPAWRTESTTMNGNDQALPLLCGKEILIS. A helical membrane pass occupies residues 34–54; the sequence is VFLILFIALVGLVGNGFVLWL. Residues 55-63 are Cytoplasmic-facing; that stretch reads LGFRMRRNA. The chain crosses the membrane as a helical span at residues 64-84; sequence FSVYVLSLAGADFLFLCFQII. Over 85 to 96 the chain is Extracellular; that stretch reads NCLVYLSNFFCS. A helical membrane pass occupies residues 97–117; that stretch reads SSINFPSFFTTVMTCAYLAGL. Residues 118-144 lie on the Cytoplasmic side of the membrane; that stretch reads SMLSTISTERCLSVLWPIWYRCRRPRH. Residues 145-165 form a helical membrane-spanning segment; the sequence is LSAVACVLLWALSLLLSILEG. The Extracellular portion of the chain corresponds to 166 to 183; it reads KFCGLFGDGDSGWCQTFD. A helical membrane pass occupies residues 184–204; that stretch reads LITAAWLIFLFMVLCGSSLAL. Residues 205–227 are Cytoplasmic-facing; sequence LVRILCGSRGLPLTRLYLTILLT. The helical transmembrane segment at 228 to 248 threads the bilayer; sequence VLVFLLCGLPFGIQWFLILWI. The Extracellular portion of the chain corresponds to 249–263; it reads WKNSDVLFCHIHPVS. Residues 264 to 284 form a helical membrane-spanning segment; it reads VVLSSLNSSANPIIYFFVGSF. The Cytoplasmic portion of the chain corresponds to 285–329; that stretch reads RKQWQLQQPILKLALQRALQDIAEVDHSEGCFRQGTPEMSRSSLV.

It belongs to the G-protein coupled receptor 1 family. Mas subfamily.

It localises to the cell membrane. Mast cell-specific receptor for basic secretagogues, i.e. cationic amphiphilic drugs, as well as endo- or exogenous peptides, consisting of a basic head group and a hydrophobic core. Recognizes and binds small molecules containing a cyclized tetrahydroisoquinoline (THIQ), such as non-steroidal neuromuscular blocking drugs (NMBDs), including tubocurarine and atracurium. In response to these compounds, mediates pseudo-allergic reactions characterized by histamine release, inflammation and airway contraction. This is Mas-related G-protein coupled receptor member X2 (MRGPRX2) from Gorilla gorilla gorilla (Western lowland gorilla).